The sequence spans 57 residues: DNA-directed RNA polymerase subunit Rpo6 (57 aa).

This sequence belongs to the archaeal Rpo6/eukaryotic RPB6 RNA polymerase subunit family. Part of the RNA polymerase complex.

The protein localises to the cytoplasm. The catalysed reaction is RNA(n) + a ribonucleoside 5'-triphosphate = RNA(n+1) + diphosphate. Its function is as follows. DNA-dependent RNA polymerase (RNAP) catalyzes the transcription of DNA into RNA using the four ribonucleoside triphosphates as substrates. The polypeptide is DNA-directed RNA polymerase subunit Rpo6 (Methanocaldococcus jannaschii (strain ATCC 43067 / DSM 2661 / JAL-1 / JCM 10045 / NBRC 100440) (Methanococcus jannaschii)).